The sequence spans 303 residues: Crk-like protein (303 aa).

The 89-residue stretch at 14–102 folds into the SH2 domain; the sequence is WYMGPVSRQE…LDTTTLIEPA (89 aa). In terms of domain architecture, SH3 1 spans 123-183; that stretch reads DNLEYVRTLY…PVPYVEKLVR (61 aa). Y127 and Y207 each carry phosphotyrosine. The interval 184–234 is disordered; that stretch reads SSPHGKHGNRNSNSYGIPEPAHAYAQPQTTTPLPAVSGSPGAAITPLPSTQ. An SH3 2 domain is found at 235–296; it reads NGPVFAKAIQ…PFTHVKIFDP (62 aa).

The protein belongs to the CRK family. As to quaternary structure, interacts with tyrosine-phosphorylated EPOR and INPP5D/SHIP1. Interacts with DOCK2 and DOCK5 via its first SH3 domain. Interacts with phosphorylated CBLB and IRS4. Interacts with BCAR1/CAS and NEDD9/HEF1.

Functionally, may mediate the transduction of intracellular signals. This Homo sapiens (Human) protein is Crk-like protein (CRKL).